The sequence spans 450 residues: IMP-specific 5'-nucleotidase 1 (450 aa).

H144 provides a ligand contact to ATP. The Nucleophile role is filled by D172. IMP is bound by residues D172, D174, D180, T208, D376, and K384. The Mg(2+) site is built by D172 and D174. D174 functions as the Proton donor in the catalytic mechanism. Residue D411 coordinates Mg(2+).

The protein belongs to the ISN1 family. In terms of assembly, homotetramer. It depends on Mg(2+) as a cofactor.

It carries out the reaction IMP + H2O = inosine + phosphate. Allosterically activated by ATP. ATP binding is a prerequisite to magnesium and substrate binding. ATP binds to 2 of the subunits in the homotetramer inducing a closure of these 2 subunits and the release of the C-terminal loop, thereby activating the enzyme. IMP-specific 5'-nucleotidase involved in IMP (inosine 5'-phosphate) degradation. The polypeptide is IMP-specific 5'-nucleotidase 1 (ISN1) (Saccharomyces cerevisiae (strain ATCC 204508 / S288c) (Baker's yeast)).